A 155-amino-acid chain; its full sequence is Large ribosomal subunit protein eL24 (155 aa).

Positions 98–129 are enriched in basic and acidic residues; that stretch reads PEVRKAKRDDKAKADKEKKKADKAARKAEKAK. Residues 98–155 are disordered; that stretch reads PEVRKAKRDDKAKADKEKKKADKAARKAEKAKLAAAQGSKVSKQQAKGAFQKVAATSR.

Belongs to the eukaryotic ribosomal protein eL24 family.

The polypeptide is Large ribosomal subunit protein eL24 (RPL24) (Candida glabrata (strain ATCC 2001 / BCRC 20586 / JCM 3761 / NBRC 0622 / NRRL Y-65 / CBS 138) (Yeast)).